We begin with the raw amino-acid sequence, 334 residues long: Protein-methionine-sulfoxide reductase catalytic subunit MsrP (334 aa).

Positions 1–44 (MKKNQFLKESDVTAESVFFMKRRQVLKALGISAAAFSLPHAAHA) form a signal peptide, tat-type signal. Mo-molybdopterin-binding positions include N88, 91 to 92 (YE), C146, T181, N233, R238, and 249 to 251 (GIK).

This sequence belongs to the MsrP family. In terms of assembly, heterodimer of a catalytic subunit (MsrP) and a heme-binding subunit (MsrQ). Mo-molybdopterin is required as a cofactor. In terms of processing, predicted to be exported by the Tat system. The position of the signal peptide cleavage has not been experimentally proven.

It localises to the periplasm. The catalysed reaction is L-methionyl-[protein] + a quinone + H2O = L-methionyl-(S)-S-oxide-[protein] + a quinol. The enzyme catalyses L-methionyl-[protein] + a quinone + H2O = L-methionyl-(R)-S-oxide-[protein] + a quinol. In terms of biological role, part of the MsrPQ system that repairs oxidized periplasmic proteins containing methionine sulfoxide residues (Met-O), using respiratory chain electrons. Thus protects these proteins from oxidative-stress damage caused by reactive species of oxygen and chlorine generated by the host defense mechanisms. MsrPQ is essential for the maintenance of envelope integrity under bleach stress, rescuing a wide series of structurally unrelated periplasmic proteins from methionine oxidation, including the primary periplasmic chaperone SurA and the lipoprotein Pal. The catalytic subunit MsrP is non-stereospecific, being able to reduce both (R-) and (S-) diastereoisomers of methionine sulfoxide. The sequence is that of Protein-methionine-sulfoxide reductase catalytic subunit MsrP from Escherichia coli O7:K1 (strain IAI39 / ExPEC).